The primary structure comprises 421 residues: uncharacterized protein (421 aa).

This is an uncharacterized protein from Bacillus subtilis (strain 168).